We begin with the raw amino-acid sequence, 522 residues long: Man(5)GlcNAc(2)-PP-dolichol translocation protein RFT1 (522 aa).

10 consecutive transmembrane segments (helical) span residues 35–55, 75–95, 108–128, 143–165, 177–197, 322–342, 354–374, 400–420, 457–477, and 479–499; these read DVLGLVNVRLTLLYSSILFLT, LLWLSPIISTVISVVCVYLWY, VLLSFPISAIIESIAEPFSVI, FAIGQGMLICVKRIFVLAGLFMF, AQYIGAIAYLLFNFVAFYIYI, VVGVIGFVACTFGIPYSPVVI, GGALLLSLYSGYILVTAINGI, IIHLIINYVLCVYMNSAGFIV, TSIFLGVSLLATSFTYLLFAT, and PGLSYTLAHIAIGAVCLILTA.

Belongs to the RFT1 family.

It localises to the endoplasmic reticulum membrane. It functions in the pathway protein modification; protein glycosylation. Its function is as follows. Intramembrane glycolipid transporter that operates in the biosynthetic pathway of dolichol-linked oligosaccharides, the glycan precursors employed in protein asparagine (N)-glycosylation. The sequential addition of sugars to dolichol pyrophosphate produces dolichol-linked oligosaccharides containing fourteen sugars, including two GlcNAcs, nine mannoses and three glucoses. Once assembled, the oligosaccharide is transferred from the lipid to nascent proteins by oligosaccharyltransferases. The assembly of dolichol-linked oligosaccharides begins on the cytosolic side of the endoplasmic reticulum membrane and finishes in its lumen. RFT1 could mediate the translocation of the cytosolically oriented intermediate DolPP-GlcNAc2Man5, produced by ALG11, into the ER lumen where dolichol-linked oligosaccharides assembly continues. However, the intramembrane lipid transporter activity could not be confirmed in vitro. In Caenorhabditis elegans, this protein is Man(5)GlcNAc(2)-PP-dolichol translocation protein RFT1.